An 847-amino-acid polypeptide reads, in one-letter code: MQRLRRGLFLLLGVGLGILAITGLAAFYVDLAWFAELHALPVLWTRVIARWGLGLGAFLFALAVTGSNICSCWRGATLAGAWAIATGLSVFFAGSLSNHWFTLLLWLNQGPVGESDPIFNRDLGFFLFSLPFWETLQHWCFNLVLLTLIAVVLIYLVELGLSEQRLTLALSLYAQRHLLILGGSLFLIRAWGHWLERYELLYSTRGVVFGAGFADVHATLPATTLMSGVAGLTAVGFWALARQGIRLNLPFLKSWCPSWASSLLAPAILWGAYLGFGLLTTQLYPQLVQTFLVTPNELELERPYIEDNIRFTRAGFGLADVEVQPFPEGGALTWEILQQNQSTLSNVRLWDADPLLATYRQLQEIRPYYQFPYVNVDRYRIGGELRQVMHAARELDFAQVPPAAQTWVNRRFFYTHGYGLTLSPVNVVTPEGLPDFFLSDIPPRVSPRYPEVASVLRVEQPALYYGELTTTDVFVGAEARELDYPAAERYVYSSYRGSGGVPIPHLWQRFLYAWHFGDLRILLSRELSSATRFLYRRQIRERIRRVMPFLLYDRDPYLVIQGGKLYWFFDAYTTSSRYPYSEHLPGFPFNYIRNSVKAVMDAYNGSIDWYIADPRDPLIQAYARIYPTLFKPLEAMPEPLRQHIRYPQDLFRLQAQQFATYHMTDPRLFYNREDQWQIPGQFRNRRRIPMQPQYLILTLPRDPQGVANHTPEFVLLSPYAPVNKQNMVAWIAARCDGENYGKLLVYEFSKQRLIYGPEQVEARVNQDPLISEQISLWNQHGSRVNLGTLLVIPIETSLLYVQPLYIEAEQGRLPQLTRVIAAYEDRVVMEPTLGQALEALFLPRGSR.

7 helical membrane passes run G7 to F27, W51 to S71, A76 to L96, F141 to L161, L168 to I188, L220 to L240, and W259 to L279.

The protein belongs to the UPF0182 family.

It localises to the cell membrane. The protein is UPF0182 protein CYB_0372 of Synechococcus sp. (strain JA-2-3B'a(2-13)) (Cyanobacteria bacterium Yellowstone B-Prime).